The following is a 140-amino-acid chain: uncharacterized protein (140 aa).

Residues 27-65 are a coiled coil; it reads LLGEVSELELQKICFNRSLRNEINQLEEQNDISFVRVER.

This is an uncharacterized protein from Pasteurella multocida (strain Pm70).